The following is a 161-amino-acid chain: Ubiquitin-conjugating enzyme E2Q-like protein 1 (161 aa).

Positions 1–154 (MKELQDIARL…VKTHEKYGWV (154 aa)) constitute a UBC core domain. Catalysis depends on Cys88, which acts as the Glycyl thioester intermediate.

Belongs to the ubiquitin-conjugating enzyme family. In terms of assembly, interacts with FBXW7.

Its subcellular location is the nucleus. The enzyme catalyses S-ubiquitinyl-[E1 ubiquitin-activating enzyme]-L-cysteine + [E2 ubiquitin-conjugating enzyme]-L-cysteine = [E1 ubiquitin-activating enzyme]-L-cysteine + S-ubiquitinyl-[E2 ubiquitin-conjugating enzyme]-L-cysteine.. The protein operates within protein modification; protein ubiquitination. In terms of biological role, probable E2 ubiquitin-protein ligase that catalyzes the covalent attachment of ubiquitin to target proteins. May facilitate the monoubiquitination and degradation of MTOR and CCNE1 through interaction with FBXW7. The chain is Ubiquitin-conjugating enzyme E2Q-like protein 1 (UBE2QL1) from Homo sapiens (Human).